Here is a 527-residue protein sequence, read N- to C-terminus: TnpB-like protein R854 (527 aa).

The span at 21–36 shows a compositional bias: basic residues; the sequence is GSKTKKKVFVKKKPPA. The tract at residues 21–50 is disordered; the sequence is GSKTKKKVFVKKKPPAKKPPDKKPLKKTTK. Residues cysteine 481, cysteine 484, cysteine 498, and cysteine 501 each coordinate Zn(2+).

The protein in the central section; belongs to the transposase 2 family. This sequence in the C-terminal section; belongs to the transposase 35 family.

The chain is TnpB-like protein R854 from Acanthamoeba polyphaga mimivirus (APMV).